The following is a 440-amino-acid chain: UDP-N-acetylmuramoylalanine--D-glutamate ligase (440 aa).

113 to 119 (GTNGKST) contacts ATP.

The protein belongs to the MurCDEF family.

Its subcellular location is the cytoplasm. The enzyme catalyses UDP-N-acetyl-alpha-D-muramoyl-L-alanine + D-glutamate + ATP = UDP-N-acetyl-alpha-D-muramoyl-L-alanyl-D-glutamate + ADP + phosphate + H(+). Its pathway is cell wall biogenesis; peptidoglycan biosynthesis. Its function is as follows. Cell wall formation. Catalyzes the addition of glutamate to the nucleotide precursor UDP-N-acetylmuramoyl-L-alanine (UMA). In Buchnera aphidicola subsp. Acyrthosiphon pisum (strain Tuc7), this protein is UDP-N-acetylmuramoylalanine--D-glutamate ligase.